The following is a 1136-amino-acid chain: Collagen alpha-1(XIX) chain (1136 aa).

The first 23 residues, 1–23 (MRHTGSWKLWTWVTTFLLPACTC), serve as a signal peptide directing secretion. An N-linked (GlcNAc...) asparagine glycan is attached at asparagine 47. The Laminin G-like domain occupies 47–231 (NKSELSGFDL…LHQLRIYCNA (185 aa)). Disordered regions lie at residues 252-272 (DFGSTTSSWGTSNTGKMSSYL), 289-673 (EEAG…PGDP), 699-1005 (GLKS…TPAD), and 1043-1136 (SAQA…AGGK). Positions 254 to 266 (GSTTSSWGTSNTG) are enriched in low complexity. The segment at 289–348 (EEAGLPGTLRSIGHKGDKGEPGEHGLDGTPGLPGQKGEQGLEGIKGEIGEKGEPGAKGDS) is triple-helical region 1 (COL1). 3 consecutive Collagen-like domains span residues 292–346 (GLPG…GAKG), 347–388 (DSGL…ALTG), and 389–430 (SIGI…GLQG). Composition is skewed to basic and acidic residues over residues 302-314 (HKGDKGEPGEHGL) and 332-344 (IKGEIGEKGEPGA). Residues 367–426 (GPPGPKGDKGDMGPPGPPALTGSIGIQGPQGPPGKEGQRGRRGKTGPPGNPGPPGPPGPP) form a triple-helical region 2 (COL2) region. Residues 387–401 (TGSIGIQGPQGPPGK) are compositionally biased toward low complexity. Pro residues predominate over residues 414-426 (PGNPGPPGPPGPP). A compositionally biased stretch (low complexity) spans 428 to 437 (LQGLQQPFGG). The segment at 442 to 682 (GTGEHGASGP…PIALPLLGDI (241 aa)) is triple-helical region 3 (COL3). Over residues 472–490 (HKGEPGEPLTKGEKGDRGE) the composition is skewed to basic and acidic residues. Low complexity-rich tracts occupy residues 511-523 (LLGSPGLKGQQGP) and 567-577 (PGLKGDAGPPG). Collagen-like domains lie at 519 to 577 (GQQG…GPPG), 578 to 618 (ISLP…GPPG), 620 to 673 (GIPG…PGDP), 722 to 777 (KGDV…GPPG), 778 to 810 (LTGRTGHPGPTGAKGDKGSEGPPGKPGPPGPPG), and 833 to 891 (GYPG…APGP). Residues 634–645 (PGIQGPRGLPGL) show a composition bias toward low complexity. The interval 694–812 (QANVPGLKSI…PGPPGPPGVP (119 aa)) is triple-helical region 4 (COL4). Basic and acidic residues-rich tracts occupy residues 714–725 (GKYDPAARKGDV) and 737–758 (EGPKGSKGERGYPGIHGEKGDE). Residues 764 to 788 (PGLSGAPGPTGPPGLTGRTGHPGPT) are compositionally biased toward low complexity. Composition is skewed to pro residues over residues 800–811 (PGKPGPPGPPGV) and 834–846 (YPGPPGPPGPKGD). The interval 827–1006 (GGVNVPGYPG…PGIPGTPADA (180 aa)) is triple-helical region 5 (COL5). Residues 877–886 (PGIAGISGKP) show a composition bias toward low complexity. Over residues 937-948 (PGDRGPKGERGD) the composition is skewed to basic and acidic residues. Positions 946–948 (RGD) match the Cell attachment site motif. The tract at residues 1048–1105 (GRPGPPGKDGLPGPPGDPGPQGYRGQKGERGEPGIGLPGSPGLPGSSAVGLPGSPGAP) is triple-helical region 6 (COL6). Residues 1087 to 1101 (SPGLPGSSAVGLPGS) are compositionally biased toward low complexity. The span at 1102 to 1113 (PGAPGPQGPPGP) shows a compositional bias: pro residues.

The protein belongs to the fibril-associated collagens with interrupted helices (FACIT) family. In terms of assembly, oligomer; disulfide-linked. Prolines at the third position of the tripeptide repeating unit (G-X-Y) are hydroxylated in some or all of the chains.

The protein localises to the secreted. It localises to the extracellular space. Its subcellular location is the extracellular matrix. In terms of biological role, may act as a cross-bridge between fibrils and other extracellular matrix molecules. Involved in skeletal myogenesis in the developing esophagus. May play a role in organization of the pericellular matrix or the sphinteric smooth muscle. The chain is Collagen alpha-1(XIX) chain from Mus musculus (Mouse).